Here is a 769-residue protein sequence, read N- to C-terminus: Serine protease HtrA-like (769 aa).

Residues 1–20 show a composition bias toward basic residues; sequence MDIGKKHVIPKSQYRRKRRE. 2 disordered regions span residues 1 to 287 and 324 to 390; these read MDIG…DKDN and EDKH…KGRA. Composition is skewed to basic and acidic residues over residues 21–64 and 71–108; these read FFHN…ERFK and LEQRNRDVNENKAEESKSNQDSKSAYNRDHYLTDDVSK. Residues 126-137 are compositionally biased toward polar residues; sequence YEQNSEATLSTK. A compositionally biased stretch (basic and acidic residues) spans 138-186; that stretch reads STDKVESTEMRKLSSDKNKVGHEEQHVLSKPSEHDKETRIDSESSRTDS. Over residues 247-262 the composition is skewed to polar residues; the sequence is QQSQNEQTKTYTYGDS. A compositionally biased stretch (basic and acidic residues) spans 264 to 287; the sequence is QNDKSNHENDLSHHTPSISDDKDN. Positions 331-347 are enriched in polar residues; sequence ADSSETVGYQSQSTASH. Over residues 348-364 the composition is skewed to basic and acidic residues; it reads RSTEKRNISINDHDKLN. A compositionally biased stretch (polar residues) spans 365–390; it reads GQKTNTKTSANNNQKKATSKLNKGRA. A helical membrane pass occupies residues 410-430; it reads LVILMGIIILIVILNAIFNNV. Active-site charge relay system residues include histidine 504, aspartate 534, and serine 619. Residues 680-733 enclose the PDZ domain; sequence IASLNSFERQAVKLPGKVKNGVVVDQVDNNGLADQSGLKKGDVITELDGKLLED.

Belongs to the peptidase S1C family.

It localises to the cell membrane. The sequence is that of Serine protease HtrA-like from Staphylococcus aureus (strain N315).